The following is a 143-amino-acid chain: Fluoride-specific ion channel FluC 1 (143 aa).

The next 4 membrane-spanning stretches (helical) occupy residues 13-33 (VLVGLVFLGGCLGTLIRSVIA), 42-62 (GVPWGTLAINLVGAFVLATLL), 80-100 (LCIGTGLLGGFTTYSALTVEA), and 111-131 (WGIAYLLTSVAAGALLAWVVI). Gly88 and Thr91 together coordinate Na(+).

It belongs to the fluoride channel Fluc/FEX (TC 1.A.43) family.

Its subcellular location is the cell membrane. It catalyses the reaction fluoride(in) = fluoride(out). Na(+) is not transported, but it plays an essential structural role and its presence is essential for fluoride channel function. In terms of biological role, fluoride-specific ion channel. Important for reducing fluoride concentration in the cell, thus reducing its toxicity. This is Fluoride-specific ion channel FluC 1 from Cutibacterium acnes (strain DSM 16379 / KPA171202) (Propionibacterium acnes).